The following is a 625-amino-acid chain: Glyco-Gag protein (625 aa).

Topologically, residues 1–66 are cytoplasmic; the sequence is LGDVSEASGA…SVFRRNRAAR (66 aa). A helical transmembrane segment spans residues 67–86; that stretch reads LVCLSIVLSFVCSLLFWTAS. The Extracellular segment spans residues 87–625; it reads KNMGQTVTTP…PQTSLLTLDD (539 aa). Asn113 carries N-linked (GlcNAc...) asparagine; by host glycosylation. Residues 195-305 are disordered; it reads PSPTAPILPS…STTSRAFPLR (111 aa). Asn479 carries N-linked (GlcNAc...) asparagine; by host glycosylation. Composition is skewed to basic and acidic residues over residues 522 to 553 and 573 to 606; these read ETPEEREERVRRETEEKEERRRAEEEQKEKER and RQDRQGGERRRPQLDKDQCAYCKEKGHWAKDCPK. The disordered stretch occupies residues 522–625; sequence ETPEEREERV…PQTSLLTLDD (104 aa).

In terms of processing, glycosylated by host. Post-translationally, cleaved by host near the middle of the molecule, releasing the c-terminal half containing capsid and nucleoprotein domains op GAG.

The protein resides in the host cell membrane. Its function is as follows. Plays a role in viral particle release. Presumably acts by facilitating the fission of the virion bud at the cell surface. May prevent the antiviral activity of murine APOBEC3. This chain is Glyco-Gag protein, found in AKV murine leukemia virus (AKR (endogenous) murine leukemia virus).